A 510-amino-acid chain; its full sequence is Hexose carrier protein HEX6 (510 aa).

The Cytoplasmic portion of the chain corresponds to 1–22 (MAAGLAITSEGGQYNGRMTSFV). Helical transmembrane passes span 23–43 (ALSC…IGVS), 83–103 (SFTS…SSVT), 118–128 (VFLAXAALGGA), 140–160 (VLLG…LSEM), 169–189 (INNG…LINY), 202–222 (ISLA…LFLP), 284–304 (LVMA…VIAF), 325–345 (IVTG…VDKL), 349–369 (ALFI…GSIM), 382–402 (GYAY…GWSW), 428–448 (AVSF…LCHF), and 451–471 (GIFF…HFLL). The Cytoplasmic portion of the chain corresponds to 472 to 510 (PETKKVPIEKMDIVWRDHWFWKKIIGEEAAEENNKMEAA).

Belongs to the major facilitator superfamily. Sugar transporter (TC 2.A.1.1) family.

It localises to the membrane. In terms of biological role, active uptake of hexoses. Probable glucose/hydrogen symport. The polypeptide is Hexose carrier protein HEX6 (HEX6) (Ricinus communis (Castor bean)).